The following is a 384-amino-acid chain: Alanine racemase (384 aa).

The Proton acceptor; specific for D-alanine role is filled by lysine 39. An N6-(pyridoxal phosphate)lysine modification is found at lysine 39. Position 138 (arginine 138) interacts with substrate. Tyrosine 265 serves as the catalytic Proton acceptor; specific for L-alanine. Methionine 312 contributes to the substrate binding site.

Belongs to the alanine racemase family. Pyridoxal 5'-phosphate is required as a cofactor.

It catalyses the reaction L-alanine = D-alanine. Its pathway is amino-acid biosynthesis; D-alanine biosynthesis; D-alanine from L-alanine: step 1/1. Catalyzes the interconversion of L-alanine and D-alanine. May also act on other amino acids. The polypeptide is Alanine racemase (alr) (Staphylococcus carnosus (strain TM300)).